A 651-amino-acid polypeptide reads, in one-letter code: tRNA uridine 5-carboxymethylaminomethyl modification enzyme MnmG (651 aa).

11-16 (GAGHAG) contributes to the FAD binding site. Residue 296-310 (GPRYCPSIEDKIVRF) participates in NAD(+) binding.

Belongs to the MnmG family. As to quaternary structure, homodimer. Heterotetramer of two MnmE and two MnmG subunits. It depends on FAD as a cofactor.

The protein localises to the cytoplasm. Its function is as follows. NAD-binding protein involved in the addition of a carboxymethylaminomethyl (cmnm) group at the wobble position (U34) of certain tRNAs, forming tRNA-cmnm(5)s(2)U34. The polypeptide is tRNA uridine 5-carboxymethylaminomethyl modification enzyme MnmG (Chloroflexus aurantiacus (strain ATCC 29366 / DSM 635 / J-10-fl)).